The sequence spans 336 residues: MSKINLLLLCGGGSAEHDISLLSANYFETSLAKSEQFNVLRVVLDKFGQYQTAAGDDCELTNNREIRFRDESKAPWPVDYVIPCIHGYPGETGDIQSYFNLIQLPYFGCESEASSNCFNKITAKMWFSALGIPNTPYIFLNQYDDEAIAQTQAALEKWGSIFVKAASQGSSVGCYKVDEASKVLGVLKDAFGYAPYVIVEKTIKARELEVAVYEYQGEVIATLPGEIICDSNTFYTFDEKYAKSSKARTDVVAQNVPTDISDQIRAYAIKAFKGMKLRHLSRIDFFLTADNEILLNEINTFPGSTPISMFPKMLQNHGHDFTQYLSLVINSQLAAK.

Residues 124–330 (KMWFSALGIP…FTQYLSLVIN (207 aa)) form the ATP-grasp domain. 154–209 (ALEKWGSIFVKAASQGSSVGCYKVDEASKVLGVLKDAFGYAPYVIVEKTIKARELE) contacts ATP. Mg(2+) contacts are provided by Asp-284, Glu-297, and Asn-299.

Belongs to the D-alanine--D-alanine ligase family. Mg(2+) serves as cofactor. Mn(2+) is required as a cofactor.

It is found in the cytoplasm. The catalysed reaction is 2 D-alanine + ATP = D-alanyl-D-alanine + ADP + phosphate + H(+). The protein operates within cell wall biogenesis; peptidoglycan biosynthesis. In terms of biological role, cell wall formation. This chain is D-alanine--D-alanine ligase, found in Shewanella oneidensis (strain ATCC 700550 / JCM 31522 / CIP 106686 / LMG 19005 / NCIMB 14063 / MR-1).